The primary structure comprises 128 residues: uncharacterized protein (128 aa).

In terms of tissue distribution, high expression in pituitary gland and weak in pancreas.

This is an uncharacterized protein from Homo sapiens (Human).